A 309-amino-acid chain; its full sequence is Foldase protein PrsA 2 (309 aa).

The signal sequence occupies residues 1–22; it reads MKQMNKLITGVVTLATVVTLSA. C23 carries N-palmitoyl cysteine lipidation. C23 is lipidated: S-diacylglycerol cysteine. A PpiC domain is found at 146–241; sequence TPTMTAEIMQ…RTYHIIKVTK (96 aa).

This sequence belongs to the PrsA family.

The protein localises to the cell membrane. It catalyses the reaction [protein]-peptidylproline (omega=180) = [protein]-peptidylproline (omega=0). Functionally, plays a major role in protein secretion by helping the post-translocational extracellular folding of several secreted proteins. The protein is Foldase protein PrsA 2 (prsA2) of Streptococcus pyogenes serotype M1.